The primary structure comprises 32 residues: Cytochrome b6-f complex subunit 7 (32 aa).

Residues 9–27 (AAVFWVLIPVGLLGGVLLL) traverse the membrane as a helical segment.

This sequence belongs to the PetM family. The 4 large subunits of the cytochrome b6-f complex are cytochrome b6, subunit IV (17 kDa polypeptide, PetD), cytochrome f and the Rieske protein, while the 4 small subunits are PetG, PetL, PetM and PetN. The complex functions as a dimer.

It is found in the cellular thylakoid membrane. Functionally, component of the cytochrome b6-f complex, which mediates electron transfer between photosystem II (PSII) and photosystem I (PSI), cyclic electron flow around PSI, and state transitions. The polypeptide is Cytochrome b6-f complex subunit 7 (Prochlorococcus marinus (strain NATL1A)).